Reading from the N-terminus, the 160-residue chain is Crossover junction endodeoxyribonuclease RuvC (160 aa).

Active-site residues include aspartate 9, glutamate 68, and aspartate 141. Residues aspartate 9, glutamate 68, and aspartate 141 each coordinate Mg(2+).

The protein belongs to the RuvC family. In terms of assembly, homodimer which binds Holliday junction (HJ) DNA. The HJ becomes 2-fold symmetrical on binding to RuvC with unstacked arms; it has a different conformation from HJ DNA in complex with RuvA. In the full resolvosome a probable DNA-RuvA(4)-RuvB(12)-RuvC(2) complex forms which resolves the HJ. Mg(2+) serves as cofactor.

Its subcellular location is the cytoplasm. The enzyme catalyses Endonucleolytic cleavage at a junction such as a reciprocal single-stranded crossover between two homologous DNA duplexes (Holliday junction).. Its function is as follows. The RuvA-RuvB-RuvC complex processes Holliday junction (HJ) DNA during genetic recombination and DNA repair. Endonuclease that resolves HJ intermediates. Cleaves cruciform DNA by making single-stranded nicks across the HJ at symmetrical positions within the homologous arms, yielding a 5'-phosphate and a 3'-hydroxyl group; requires a central core of homology in the junction. The consensus cleavage sequence is 5'-(A/T)TT(C/G)-3'. Cleavage occurs on the 3'-side of the TT dinucleotide at the point of strand exchange. HJ branch migration catalyzed by RuvA-RuvB allows RuvC to scan DNA until it finds its consensus sequence, where it cleaves and resolves the cruciform DNA. This is Crossover junction endodeoxyribonuclease RuvC from Campylobacter jejuni subsp. jejuni serotype O:2 (strain ATCC 700819 / NCTC 11168).